Reading from the N-terminus, the 161-residue chain is TRAF-interacting protein with FHA domain-containing protein B (161 aa).

One can recognise an FHA domain in the interval 36–91; the sequence is LLLGRGQDAHLQLQLPRLSRRHLSLEPYLEKGSALLAFCLKALSRKGCVWVNGLTL.

In terms of assembly, interacts with TIFA.

In terms of biological role, inhibits TIFA-mediated TRAF6 activation possibly by inducing a conformational change in TIFA. The sequence is that of TRAF-interacting protein with FHA domain-containing protein B from Homo sapiens (Human).